Here is a 229-residue protein sequence, read N- to C-terminus: Peptidase E (229 aa).

Active-site charge relay system residues include serine 120, aspartate 135, and histidine 157.

Belongs to the peptidase S51 family.

The protein localises to the cytoplasm. It catalyses the reaction Dipeptidase E catalyzes the hydrolysis of dipeptides Asp-|-Xaa. It does not act on peptides with N-terminal Glu, Asn or Gln, nor does it cleave isoaspartyl peptides.. Functionally, hydrolyzes dipeptides containing N-terminal aspartate residues. May play a role in allowing the cell to use peptide aspartate to spare carbon otherwise required for the synthesis of the aspartate family of amino acids. The chain is Peptidase E from Shigella sonnei (strain Ss046).